We begin with the raw amino-acid sequence, 392 residues long: Cytochrome b (392 aa).

A run of 4 helical transmembrane segments spans residues 38-58 (FGSL…FLAM), 82-104 (WLLR…LHIF), 119-139 (VRCL…TGYV), and 185-205 (FFSL…LHLA). Residues His88 and His102 each contribute to the heme b site. The heme b site is built by His189 and His203. His208 is a binding site for a ubiquinone. Helical transmembrane passes span 231-251 (FYVK…IWIF), 295-315 (SGGV…PFFK), 327-347 (IHQG…WIGC), and 354-373 (FVTI…AITP).

Belongs to the cytochrome b family. As to quaternary structure, the main subunits of complex b-c1 are: cytochrome b, cytochrome c1 and the Rieske protein. Heme b is required as a cofactor.

The protein resides in the mitochondrion inner membrane. In terms of biological role, component of the ubiquinol-cytochrome c reductase complex (complex III or cytochrome b-c1 complex) that is part of the mitochondrial respiratory chain. The b-c1 complex mediates electron transfer from ubiquinol to cytochrome c. Contributes to the generation of a proton gradient across the mitochondrial membrane that is then used for ATP synthesis. This Pisum sativum (Garden pea) protein is Cytochrome b (MT-CYB).